The following is an 840-amino-acid chain: V-type proton ATPase 116 kDa subunit a 4 (840 aa).

Topologically, residues 1–390 (MVSVFRSEEM…DAYGVGSYRE (390 aa)) are cytoplasmic. A helical membrane pass occupies residues 391 to 409 (INPAPYTIITFPFLFAVMF). Residues 410 to 411 (GD) lie on the Vacuolar side of the membrane. Residues 412–428 (CGHGTVMLLAALWMILN) traverse the membrane as a helical segment. The Cytoplasmic portion of the chain corresponds to 429–443 (ERRLLSQKTDNEIWN). The chain crosses the membrane as a helical span at residues 444–473 (TFFHGRYLILLMGIFSIYTGLIYNDCFSKS). The Vacuolar portion of the chain corresponds to 474 to 538 (LNIFGSSWSV…ASNKLTFLNS (65 aa)). Residues 539 to 558 (YKMKMSVILGIVQMVFGVIL) traverse the membrane as a helical segment. Over 559 to 576 (SLFNHIYFRRTLNIILQF) the chain is Cytoplasmic. The chain crosses the membrane as a helical span at residues 577–597 (IPEMIFILCLFGYLVFMIIFK). The Vacuolar portion of the chain corresponds to 598–642 (WCCFDVHVSQHAPSILIHFINMFLFNYSDSSNAPLYKHQQEVQSF). Residues 643–662 (FVVMALISVPWMLLIKPFIL) traverse the membrane as a helical segment. Residues 663 to 727 (RASHRKSQLQ…DVFVHQAIHT (65 aa)) are Cytoplasmic-facing. A disordered region spans residues 675–704 (RIQEDATENIEGDSSSPSSRSGQRTSADTH). Residues 728-752 (IEYCLGCISNTASYLRLWALSLAHA) form a helical membrane-spanning segment. The Vacuolar segment spans residues 753–773 (QLSEVLWTMVMNSGLQTRGWG). The chain crosses the membrane as a helical span at residues 774-812 (GIVGVFIIFAVFAVLTVAILLIMEGLSAFLHALRLHWVE). Residues 813–840 (FQNKFYVGDGYKFSPFSFKHILDGTAEE) are Cytoplasmic-facing.

This sequence belongs to the V-ATPase 116 kDa subunit family. As to quaternary structure, V-ATPase is a heteromultimeric enzyme made up of two complexes: the ATP-hydrolytic V1 complex and the proton translocation V0 complex. The V1 complex consists of three catalytic AB heterodimers that form a heterohexamer, three peripheral stalks each consisting of EG heterodimers, one central rotor including subunits D and F, and the regulatory subunits C and H. The proton translocation complex V0 consists of the proton transport subunit a, a ring of proteolipid subunits c9c'', rotary subunit d, subunits e and f, and the accessory subunits ATP6AP1/Ac45 and ATP6AP2/PRR. Interacts with the V1 complex V-ATPase subunit A ATP6V1A. Interacts with the V0 complex V-ATPase subunit c ATP6V0C. Expressed in adult and fetal kidney. Found in the inner ear.

The protein localises to the apical cell membrane. The protein resides in the basolateral cell membrane. Its function is as follows. Subunit of the V0 complex of vacuolar(H+)-ATPase (V-ATPase), a multisubunit enzyme composed of a peripheral complex (V1) that hydrolyzes ATP and a membrane integral complex (V0) that translocates protons. V-ATPase is responsible for acidifying and maintaining the pH of intracellular compartments and in some cell types, is targeted to the plasma membrane, where it is responsible for acidifying the extracellular environment. Involved in normal vectorial acid transport into the urine by the kidney. This is V-type proton ATPase 116 kDa subunit a 4 (ATP6V0A4) from Homo sapiens (Human).